Consider the following 509-residue polypeptide: Histidine ammonia-lyase (509 aa).

Residues 142–144 (ASG) constitute a cross-link (5-imidazolinone (Ala-Gly)). 2,3-didehydroalanine (Ser) is present on Ser-143.

The protein belongs to the PAL/histidase family. Post-translationally, contains an active site 4-methylidene-imidazol-5-one (MIO), which is formed autocatalytically by cyclization and dehydration of residues Ala-Ser-Gly.

It localises to the cytoplasm. The enzyme catalyses L-histidine = trans-urocanate + NH4(+). Its pathway is amino-acid degradation; L-histidine degradation into L-glutamate; N-formimidoyl-L-glutamate from L-histidine: step 1/3. The polypeptide is Histidine ammonia-lyase (Pseudomonas aeruginosa (strain UCBPP-PA14)).